The sequence spans 292 residues: Formamidopyrimidine-DNA glycosylase (292 aa).

Catalysis depends on Pro-2, which acts as the Schiff-base intermediate with DNA. Catalysis depends on Glu-3, which acts as the Proton donor. Catalysis depends on Lys-58, which acts as the Proton donor; for beta-elimination activity. Residues His-103, Arg-122, and Lys-165 each contribute to the DNA site. The FPG-type zinc finger occupies 256–292; it reads RVYDRALHPCPTPGCKGEISRITQGGRSSFFCSMCQK. The Proton donor; for delta-elimination activity role is filled by Arg-282.

This sequence belongs to the FPG family. As to quaternary structure, monomer. Zn(2+) serves as cofactor.

It carries out the reaction Hydrolysis of DNA containing ring-opened 7-methylguanine residues, releasing 2,6-diamino-4-hydroxy-5-(N-methyl)formamidopyrimidine.. The enzyme catalyses 2'-deoxyribonucleotide-(2'-deoxyribose 5'-phosphate)-2'-deoxyribonucleotide-DNA = a 3'-end 2'-deoxyribonucleotide-(2,3-dehydro-2,3-deoxyribose 5'-phosphate)-DNA + a 5'-end 5'-phospho-2'-deoxyribonucleoside-DNA + H(+). Its function is as follows. Involved in base excision repair of DNA damaged by oxidation or by mutagenic agents. Acts as a DNA glycosylase that recognizes and removes damaged bases. Has a preference for oxidized purines, such as 7,8-dihydro-8-oxoguanine (8-oxoG). Has AP (apurinic/apyrimidinic) lyase activity and introduces nicks in the DNA strand. Cleaves the DNA backbone by beta-delta elimination to generate a single-strand break at the site of the removed base with both 3'- and 5'-phosphates. The sequence is that of Formamidopyrimidine-DNA glycosylase from Methylocella silvestris (strain DSM 15510 / CIP 108128 / LMG 27833 / NCIMB 13906 / BL2).